A 435-amino-acid chain; its full sequence is 3-ketoacyl-CoA thiolase (435 aa).

The active-site Acyl-thioester intermediate is C98. Residues H391 and C421 each act as proton acceptor in the active site.

Belongs to the thiolase-like superfamily. Thiolase family. As to quaternary structure, heterotetramer of two alpha chains (FadJ) and two beta chains (FadI).

It localises to the cytoplasm. The enzyme catalyses an acyl-CoA + acetyl-CoA = a 3-oxoacyl-CoA + CoA. The protein operates within lipid metabolism; fatty acid beta-oxidation. Functionally, catalyzes the final step of fatty acid oxidation in which acetyl-CoA is released and the CoA ester of a fatty acid two carbons shorter is formed. The polypeptide is 3-ketoacyl-CoA thiolase (Colwellia psychrerythraea (strain 34H / ATCC BAA-681) (Vibrio psychroerythus)).